The primary structure comprises 349 residues: Phosphoribosylformylglycinamidine cyclo-ligase (349 aa).

The protein belongs to the AIR synthase family.

It is found in the cytoplasm. The enzyme catalyses 2-formamido-N(1)-(5-O-phospho-beta-D-ribosyl)acetamidine + ATP = 5-amino-1-(5-phospho-beta-D-ribosyl)imidazole + ADP + phosphate + H(+). The protein operates within purine metabolism; IMP biosynthesis via de novo pathway; 5-amino-1-(5-phospho-D-ribosyl)imidazole from N(2)-formyl-N(1)-(5-phospho-D-ribosyl)glycinamide: step 2/2. This Jannaschia sp. (strain CCS1) protein is Phosphoribosylformylglycinamidine cyclo-ligase.